The sequence spans 972 residues: Nuclear factor NF-kappa-B p105 subunit (972 aa).

An RHD domain is found at alanine 39–asparagine 246. Residue cysteine 61 is modified to S-nitrosocysteine; alternate. The S-(15-deoxy-Delta12,14-prostaglandin J2-9-yl)cysteine; alternate moiety is linked to residue cysteine 61. Lysine 325 is covalently cross-linked (Glycyl lysine isopeptide (Lys-Gly) (interchain with G-Cter in SUMO2)). The residue at position 337 (serine 337) is a Phosphoserine; by PKA. The Nuclear localization signal motif lies at glutamine 360 to lysine 365. Residues aspartate 372–glycine 394 form a GRR region. A disordered region spans residues lysine 425–methionine 473. 2 positions are modified to N6-acetyllysine; by EP300: lysine 431 and lysine 440. Residues isoleucine 435–isoleucine 972 are interaction with CFLAR. Basic and acidic residues predominate over residues serine 439–alanine 454. 6 ANK repeats span residues asparagine 539 to serine 568, leucine 578 to leucine 607, leucine 611 to leucine 640, glutamate 647 to alanine 676, serine 681 to serine 711, and aspartate 715 to valine 744. The segment at glutamate 647–serine 681 is essential for interaction with HIF1AN. Residue asparagine 675 is modified to (3S)-3-hydroxyasparagine; by HIF1AN. Serine 756 carries the phosphoserine modification. An ANK 7 repeat occupies proline 768 to aspartate 798. In terms of domain architecture, Death spans leucine 814–phenylalanine 889. A disordered region spans residues threonine 894–aspartate 926. Residues glutamine 905 to serine 918 show a composition bias toward polar residues. Residues serine 908 and serine 912 each carry the phosphoserine; by GSK3-beta; in vitro modification. Serine 927 carries the post-translational modification Phosphoserine. 2 positions are modified to phosphoserine; by IKKB: serine 931 and serine 936. Position 941 is a phosphoserine (serine 941). Residue threonine 947 is modified to Phosphothreonine.

Component of the NF-kappa-B p65-p50 complex. Homodimer; component of the NF-kappa-B p50-p50 complex. Component of the NF-kappa-B p105-p50 complex. Component of the NF-kappa-B p50-c-Rel complex. Component of a complex consisting of the NF-kappa-B p50-p50 homodimer and BCL3. Also interacts with MAP3K8. NF-kappa-B p50 subunit interacts with NCOA3 coactivator, which may coactivate NF-kappa-B dependent expression via its histone acetyltransferase activity. Interacts with TSC22D3; this interaction prevents nuclear translocation and DNA-binding. Interacts with SPAG9 and UNC5CL. NFKB1/p105 interacts with CFLAR; the interaction inhibits p105 processing into p50. NFKB1/p105 forms a ternary complex with MAP3K8 and TNIP2. Interacts with GSK3B; the interaction prevents processing of p105 to p50. NFKB1/p50 interacts with NFKBIE. NFKB1/p50 interacts with NFKBIZ. Nuclear factor NF-kappa-B p50 subunit interacts with NFKBID. Directly interacts with MEN1. Interacts with HIF1AN. Interacts with FEM1A; interaction is direct. Post-translationally, generation of the NF-kappa-B p50 (Nuclear factor NF-kappa-B p50 subunit) transcription factor takes place both cotranslationally and post-translationally via non-mutually exclusive mechanisms. A cotranslational processing allows the production of both p50 and p105 (Nuclear factor NF-kappa-B p105 subunit) from a single NFKB1 mRNA. While translation occurs, the particular unfolded structure after the GRR repeat region acts as a substrate for the proteasome, promoting degradation of the C-terminus. The GRR acts as a proteasomal 'stop signal', protecting the region upstream of the GRR from degradation and promoting generation of p50. It is unclear if limited proteasome degradation during cotranslational processing depends on ubiquitination. NF-kappa-B p50 is also generated post-translationally following ubiquitination by the KPC complex, leading to limited processing by the proteasome downstream of the GRR region, thereby generating p50. In terms of processing, phosphorylation at the C-terminus by IKBKB/IKKB acts as a signal for ubiquitination and promotes either complete degradation or processing to generate the NF-kappa-B p50 (Nuclear factor NF-kappa-B p50 subunit). Phosphorylation at Ser-908 and Ser-912 primes p105 for proteolytic processing in response to TNF-alpha stimulation. Phosphorylation at Ser-927, Ser-931 and Ser-936 are required for BTRC/BTRCP-mediated ubiquitination and proteolysis. Phosphorylation at Ser-931 is also required for ubiquitination by the KPC complex and limited processing to generate NF-kappa-B p50 (Nuclear factor NF-kappa-B p50 subunit). Polyubiquitinated at multiple Lys residues in the C-terminus. Polyubiquitinated by the SCF(FBXW11) and SCF(BTRC) complexes following phosphorylation at Ser-923, Ser-927, Ser-931 and Ser-936, leading to its complete degradation. In contrast, polyubiquitination by the KPC complex following phosphorylation at Ser-931 leads to limited proteosomal processing and generation of the active NF-kappa-B p50 (Nuclear factor NF-kappa-B p50 subunit). Post-translationally, S-nitrosylation of Cys-61 affects DNA binding. In terms of processing, the covalent modification of cysteine by 15-deoxy-Delta12,14-prostaglandin-J2 is autocatalytic and reversible. It may occur as an alternative to other cysteine modifications, such as S-nitrosylation and S-palmitoylation.

It is found in the cytoplasm. The protein localises to the nucleus. Functionally, NF-kappa-B is a pleiotropic transcription factor present in almost all cell types and is the endpoint of a series of signal transduction events that are initiated by a vast array of stimuli related to many biological processes such as inflammation, immunity, differentiation, cell growth, tumorigenesis and apoptosis. NF-kappa-B is a homo- or heterodimeric complex formed by the Rel-like domain-containing proteins RELA/p65, RELB, NFKB1/p105, NFKB1/p50, REL and NFKB2/p52 and the heterodimeric p65-p50 complex appears to be most abundant one. The dimers bind at kappa-B sites in the DNA of their target genes and the individual dimers have distinct preferences for different kappa-B sites that they can bind with distinguishable affinity and specificity. Different dimer combinations act as transcriptional activators or repressors, respectively. NF-kappa-B is controlled by various mechanisms of post-translational modification and subcellular compartmentalization as well as by interactions with other cofactors or corepressors. NF-kappa-B complexes are held in the cytoplasm in an inactive state complexed with members of the NF-kappa-B inhibitor (I-kappa-B) family. In a conventional activation pathway, I-kappa-B is phosphorylated by I-kappa-B kinases (IKKs) in response to different activators, subsequently degraded thus liberating the active NF-kappa-B complex which translocates to the nucleus. NF-kappa-B heterodimeric p65-p50 and RelB-p50 complexes are transcriptional activators. The NF-kappa-B p50-p50 homodimer is a transcriptional repressor, but can act as a transcriptional activator when associated with BCL3. NFKB1 appears to have dual functions such as cytoplasmic retention of attached NF-kappa-B proteins by p105 and generation of p50 by a cotranslational processing. The proteasome-mediated process ensures the production of both p50 and p105 and preserves their independent function, although processing of NFKB1/p105 also appears to occur post-translationally. p50 binds to the kappa-B consensus sequence 5'-GGRNNYYCC-3', located in the enhancer region of genes involved in immune response and acute phase reactions. In a complex with MAP3K8, NFKB1/p105 represses MAP3K8-induced MAPK signaling; active MAP3K8 is released by proteasome-dependent degradation of NFKB1/p105. In terms of biological role, P105 is the precursor of the active p50 subunit (Nuclear factor NF-kappa-B p50 subunit) of the nuclear factor NF-kappa-B. Acts as a cytoplasmic retention of attached NF-kappa-B proteins by p105. Its function is as follows. Constitutes the active form, which associates with RELA/p65 to form the NF-kappa-B p65-p50 complex to form a transcription factor. Together with RELA/p65, binds to the kappa-B consensus sequence 5'-GGRNNYYCC-3', located in the enhancer region of genes involved in immune response and acute phase reactions. This chain is Nuclear factor NF-kappa-B p105 subunit (NFKB1), found in Canis lupus familiaris (Dog).